Reading from the N-terminus, the 70-residue chain is ATP synthase subunit c (70 aa).

2 consecutive transmembrane segments (helical) span residues 5 to 25 (AAGI…AIIV) and 47 to 67 (FIGV…SFIL).

Belongs to the ATPase C chain family. As to quaternary structure, F-type ATPases have 2 components, F(1) - the catalytic core - and F(0) - the membrane proton channel. F(1) has five subunits: alpha(3), beta(3), gamma(1), delta(1), epsilon(1). F(0) has three main subunits: a(1), b(2) and c(10-14). The alpha and beta chains form an alternating ring which encloses part of the gamma chain. F(1) is attached to F(0) by a central stalk formed by the gamma and epsilon chains, while a peripheral stalk is formed by the delta and b chains.

It is found in the cell membrane. F(1)F(0) ATP synthase produces ATP from ADP in the presence of a proton or sodium gradient. F-type ATPases consist of two structural domains, F(1) containing the extramembraneous catalytic core and F(0) containing the membrane proton channel, linked together by a central stalk and a peripheral stalk. During catalysis, ATP synthesis in the catalytic domain of F(1) is coupled via a rotary mechanism of the central stalk subunits to proton translocation. Functionally, key component of the F(0) channel; it plays a direct role in translocation across the membrane. A homomeric c-ring of between 10-14 subunits forms the central stalk rotor element with the F(1) delta and epsilon subunits. This chain is ATP synthase subunit c, found in Halalkalibacterium halodurans (strain ATCC BAA-125 / DSM 18197 / FERM 7344 / JCM 9153 / C-125) (Bacillus halodurans).